We begin with the raw amino-acid sequence, 387 residues long: G-protein coupled receptor homolog R33 (387 aa).

At 1-33 (MDVLLGTEELEDELHQLHFNYTCVPSLGLSVAR) the chain is on the extracellular side. The N-linked (GlcNAc...) asparagine; by host glycan is linked to Asn20. The chain crosses the membrane as a helical span at residues 34 to 61 (DAETAVNFLIVLVGGPMNFLVLATQMLS). The Cytoplasmic portion of the chain corresponds to 62 to 71 (NRSYSVSTPT). A helical transmembrane segment spans residues 72–94 (LYMTNLYLANLLTVATLPFLMLS). At 95–107 (NRGLVGSSPEGCK) the chain is on the extracellular side. Residues 108 to 129 (IAALAYYATCTAGFATLMLIAI) traverse the membrane as a helical segment. The Cytoplasmic segment spans residues 130–150 (NRYRVIHQRTRSGAGSKRQTY). A helical transmembrane segment spans residues 151-169 (AVLAVTWLASLMCASPAPL). The Extracellular segment spans residues 170 to 204 (YATVMAHDSADALAFETCIIYFSYDQVKTVLATFK). The helical transmembrane segment at 205 to 224 (ILITMIWGITPVVMMSWFYV) threads the bilayer. Topologically, residues 225–244 (FFYRRLKLTSYRRRSQTLTF) are cytoplasmic. A helical membrane pass occupies residues 245 to 268 (VTTLMLSFLVVQTPFVAIMSYDSY). The Extracellular segment spans residues 269-285 (GVLNWPINCDTINKRDA). The chain crosses the membrane as a helical span at residues 286–309 (VSMLARVVPNFHCLLNPVLYAFLG). The Cytoplasmic portion of the chain corresponds to 310-387 (RDFNKRFILC…PPPPPPPPNC (78 aa)). Residues 368–387 (RLRALGRPPPPPPPPPPPNC) are disordered. The span at 374-387 (RPPPPPPPPPPPNC) shows a compositional bias: pro residues.

The protein belongs to the G-protein coupled receptor 1 family.

Its subcellular location is the host cell membrane. Plays an important role in vivo, in particular in the dissemination to or replication in the salivary gland. In Rattus, this protein is G-protein coupled receptor homolog R33.